The primary structure comprises 418 residues: Beta-arrestin-1 (418 aa).

The tract at residues 1–163 is interaction with SRC; that stretch reads MGDKGTRVFK…LEEKIHKRNS (163 aa). The tract at residues 45–86 is interaction with CHRM2; that stretch reads PEYLKERRVYVTLTCAFRYGREDLDVLGLTFRKDLFVANVQS. The residue at position 47 (Tyr47) is a Phosphotyrosine. 1D-myo-inositol hexakisphosphate is bound by residues Lys250, Met255, Lys324, and Lys326. The segment at 318–418 is interaction with TRAF6; the sequence is IVSYKVKVKL…GTGSPHLNNR (101 aa). 2 disordered regions span residues 353–375 and 397–418; these read HPKPKEEPPHREVPESETPVDTN and KGMKDDKDEEDDGTGSPHLNNR. Basic and acidic residues predominate over residues 355-366; it reads KPKEEPPHREVP. Ser412 carries the post-translational modification Phosphoserine.

Belongs to the arrestin family. In terms of assembly, monomer. Homodimer. Homooligomer; the self-association is mediated by InsP6-binding. Heterooligomer with ARRB2; the association is mediated by InsP6-binding. Interacts with ADRB2 (phosphorylated). Interacts with CHRM2 (phosphorylated). Interacts with LHCGR. Interacts with CYTH2 and CASR. Interacts with AP2B1 (dephosphorylated); phosphorylation of AP2B1 disrupts the interaction. Interacts (dephosphorylated at Ser-412) with CLTC. Interacts with CCR2 and GRK2. Interacts with CRR5. Interacts with PTAFR (phosphorylated on serine residues). Interacts with CLTC and MAP2K3. Interacts with CREB1. Interacts with TRAF6. Interacts with IGF1R and MDM2. Interacts with C5AR1. Interacts with PDE4D. Interacts with SRC (via the SH3 domain and the protein kinase domain); the interaction is independent of the phosphorylation state of SRC C-terminus. Interacts with TACR1. Interacts with RAF1. Interacts with DVL1; the interaction is enhanced by phosphorylation of DVL1. Interacts with DVL2; the interaction is enhanced by phosphorylation of DVL2. Interacts with IGF1R. Interacts with CHUK, IKBKB and MAP3K14. Associates with MAP kinase p38. Part of a MAPK signaling complex consisting of TACR1, ARRB1, SRC, MAPK1 (activated) and MAPK3 (activated). Part of a MAPK signaling complex consisting of F2RL1, ARRB1, RAF1, MAPK1 (activated) and MAPK3 (activated). Interacts with GPR143. Interacts with MAP2K4/MKK4. Interacts with HCK and CXCR1 (phosphorylated). Interacts with ACKR3 and ACKR4. Interacts with ARRDC1; the interaction is direct. Interacts with GPR61, GPR62 and GPR135. Post-translationally, constitutively phosphorylated at in the cytoplasm. At the plasma membrane, is rapidly dephosphorylated, a process that is required for clathrin binding and ADRB2 endocytosis but not for ADRB2 binding and desensitization. Once internalized, is rephosphorylated. In terms of processing, the ubiquitination status appears to regulate the formation and trafficking of beta-arrestin-GPCR complexes and signaling. Ubiquitination appears to occur GPCR-specific. Ubiquitinated by MDM2; the ubiquitination is required for rapid internalization of ADRB2. Deubiquitinated by USP33; the deubiquitination leads to a dissociation of the beta-arrestin-GPCR complex. Stimulation of a class A GPCR, such as ADRB2, induces transient ubiquitination and subsequently promotes association with USP33.

The protein localises to the cytoplasm. It is found in the nucleus. Its subcellular location is the cell membrane. It localises to the membrane. The protein resides in the clathrin-coated pit. The protein localises to the cell projection. It is found in the pseudopodium. Its subcellular location is the cytoplasmic vesicle. In terms of biological role, functions in regulating agonist-mediated G-protein coupled receptor (GPCR) signaling by mediating both receptor desensitization and resensitization processes. During homologous desensitization, beta-arrestins bind to the GPRK-phosphorylated receptor and sterically preclude its coupling to the cognate G-protein; the binding appears to require additional receptor determinants exposed only in the active receptor conformation. The beta-arrestins target many receptors for internalization by acting as endocytic adapters (CLASPs, clathrin-associated sorting proteins) and recruiting the GPRCs to the adapter protein 2 complex 2 (AP-2) in clathrin-coated pits (CCPs). However, the extent of beta-arrestin involvement appears to vary significantly depending on the receptor, agonist and cell type. Internalized arrestin-receptor complexes traffic to intracellular endosomes, where they remain uncoupled from G-proteins. Two different modes of arrestin-mediated internalization occur. Class A receptors, like ADRB2, OPRM1, ENDRA, D1AR and ADRA1B dissociate from beta-arrestin at or near the plasma membrane and undergo rapid recycling. Class B receptors, like AVPR2, AGTR1, NTSR1, TRHR and TACR1 internalize as a complex with arrestin and traffic with it to endosomal vesicles, presumably as desensitized receptors, for extended periods of time. Receptor resensitization then requires that receptor-bound arrestin is removed so that the receptor can be dephosphorylated and returned to the plasma membrane. Involved in internalization of P2RY4 and UTP-stimulated internalization of P2RY2. Involved in phosphorylation-dependent internalization of OPRD1 ands subsequent recycling. Involved in the degradation of cAMP by recruiting cAMP phosphodiesterases to ligand-activated receptors. Beta-arrestins function as multivalent adapter proteins that can switch the GPCR from a G-protein signaling mode that transmits short-lived signals from the plasma membrane via small molecule second messengers and ion channels to a beta-arrestin signaling mode that transmits a distinct set of signals that are initiated as the receptor internalizes and transits the intracellular compartment. Acts as a signaling scaffold for MAPK pathways such as MAPK1/3 (ERK1/2). ERK1/2 activated by the beta-arrestin scaffold is largely excluded from the nucleus and confined to cytoplasmic locations such as endocytic vesicles, also called beta-arrestin signalosomes. Recruits c-Src/SRC to ADRB2 resulting in ERK activation. GPCRs for which the beta-arrestin-mediated signaling relies on both ARRB1 and ARRB2 (codependent regulation) include ADRB2, F2RL1 and PTH1R. For some GPCRs the beta-arrestin-mediated signaling relies on either ARRB1 or ARRB2 and is inhibited by the other respective beta-arrestin form (reciprocal regulation). Inhibits ERK1/2 signaling in AGTR1- and AVPR2-mediated activation (reciprocal regulation). Is required for SP-stimulated endocytosis of NK1R and recruits c-Src/SRC to internalized NK1R resulting in ERK1/2 activation, which is required for the antiapoptotic effects of SP. Is involved in proteinase-activated F2RL1-mediated ERK activity. Acts as a signaling scaffold for the AKT1 pathway. Is involved in alpha-thrombin-stimulated AKT1 signaling. Is involved in IGF1-stimulated AKT1 signaling leading to increased protection from apoptosis. Involved in activation of the p38 MAPK signaling pathway and in actin bundle formation. Involved in F2RL1-mediated cytoskeletal rearrangement and chemotaxis. Involved in AGTR1-mediated stress fiber formation by acting together with GNAQ to activate RHOA. Appears to function as signaling scaffold involved in regulation of MIP-1-beta-stimulated CCR5-dependent chemotaxis. Involved in attenuation of NF-kappa-B-dependent transcription in response to GPCR or cytokine stimulation by interacting with and stabilizing CHUK. May serve as nuclear messenger for GPCRs. Involved in OPRD1-stimulated transcriptional regulation by translocating to CDKN1B and FOS promoter regions and recruiting EP300 resulting in acetylation of histone H4. Involved in regulation of LEF1 transcriptional activity via interaction with DVL1 and/or DVL2 Also involved in regulation of receptors other than GPCRs. Involved in Toll-like receptor and IL-1 receptor signaling through the interaction with TRAF6 which prevents TRAF6 autoubiquitination and oligomerization required for activation of NF-kappa-B and JUN. Involved in IL8-mediated granule release in neutrophils. Binds phosphoinositides. Binds inositolhexakisphosphate (InsP6). Required for atypical chemokine receptor ACKR2-induced RAC1-LIMK1-PAK1-dependent phosphorylation of cofilin (CFL1) and for the up-regulation of ACKR2 from endosomal compartment to cell membrane, increasing its efficiency in chemokine uptake and degradation. Involved in the internalization of the atypical chemokine receptor ACKR3. Negatively regulates the NOTCH signaling pathway by mediating the ubiquitination and degradation of NOTCH1 by ITCH. Participates in the recruitment of the ubiquitin-protein ligase to the receptor. This is Beta-arrestin-1 (Arrb1) from Mus musculus (Mouse).